Consider the following 433-residue polypeptide: 23S rRNA (uracil(1939)-C(5))-methyltransferase RlmD (433 aa).

The 59-residue stretch at 10-68 (RTTTRQIITVSVNDLDSFGQGVARHNGKTLFIPGLLPQENAEVTVTEDKKQYARAKVVR) folds into the TRAM domain. 4 residues coordinate [4Fe-4S] cluster: Cys81, Cys87, Cys90, and Cys162. Residues Gln265, Phe294, Asn299, Glu315, Asn342, and Asp363 each coordinate S-adenosyl-L-methionine. Cys389 functions as the Nucleophile in the catalytic mechanism.

The protein belongs to the class I-like SAM-binding methyltransferase superfamily. RNA M5U methyltransferase family. RlmD subfamily.

It carries out the reaction uridine(1939) in 23S rRNA + S-adenosyl-L-methionine = 5-methyluridine(1939) in 23S rRNA + S-adenosyl-L-homocysteine + H(+). Functionally, catalyzes the formation of 5-methyl-uridine at position 1939 (m5U1939) in 23S rRNA. This Escherichia coli O6:K15:H31 (strain 536 / UPEC) protein is 23S rRNA (uracil(1939)-C(5))-methyltransferase RlmD.